Here is a 424-residue protein sequence, read N- to C-terminus: Probable threonylcarbamoyladenosine tRNA methylthiotransferase (424 aa).

Positions 1-106 (MRVAIETYGC…VVDAVYSALN (106 aa)) constitute an MTTase N-terminal domain. Residues cysteine 10, cysteine 44, cysteine 73, cysteine 143, cysteine 147, and cysteine 150 each contribute to the [4Fe-4S] cluster site. In terms of domain architecture, Radical SAM core spans 129 to 359 (LRENAIAIVS…TDLMRKIGLE (231 aa)). The TRAM domain maps to 362–420 (KRFVGKKLRVLVTKEGKNGRNLARMNSYRAVVTEGAVGEFVEVKIKDCRFNYLIGQLAA).

Belongs to the methylthiotransferase family. CDKAL1 subfamily. [4Fe-4S] cluster is required as a cofactor.

The catalysed reaction is N(6)-L-threonylcarbamoyladenosine(37) in tRNA + (sulfur carrier)-SH + AH2 + 2 S-adenosyl-L-methionine = 2-methylsulfanyl-N(6)-L-threonylcarbamoyladenosine(37) in tRNA + (sulfur carrier)-H + 5'-deoxyadenosine + L-methionine + A + S-adenosyl-L-homocysteine + 2 H(+). Catalyzes the methylthiolation of N6-threonylcarbamoyladenosine (t(6)A), leading to the formation of 2-methylthio-N6-threonylcarbamoyladenosine (ms(2)t(6)A) at position 37 in tRNAs that read codons beginning with adenine. This chain is Probable threonylcarbamoyladenosine tRNA methylthiotransferase, found in Archaeoglobus fulgidus (strain ATCC 49558 / DSM 4304 / JCM 9628 / NBRC 100126 / VC-16).